The sequence spans 400 residues: Multidrug resistance protein MdtH (400 aa).

The Cytoplasmic segment spans residues 1 to 12 (MSRVSQARNLGK). Residues 13 to 33 (YFLLIDNMLVVLGFFVVFPLI) form a helical membrane-spanning segment. The Periplasmic portion of the chain corresponds to 34 to 98 (SIRFVDQMGW…GFATMGIAHE (65 aa)). A helical membrane pass occupies residues 99–116 (PWLLWFSCLLSGLGGTLF). Residues 117–138 (DPPRSALVVKLIRPQQRGRFFS) lie on the Cytoplasmic side of the membrane. Residues 139-159 (LLMMQDSAGAVIGALLGSWLL) form a helical membrane-spanning segment. The Periplasmic segment spans residues 160-164 (QYDFR). The helical transmembrane segment at 165–185 (LVCATGAVLFVLCAAFNAWLL) threads the bilayer. The Cytoplasmic segment spans residues 186–213 (PAWKLSTVRTPVREGMTRVMRDKRFVTY). A helical transmembrane segment spans residues 214 to 232 (VLTLAGYYMLAVQVMLPIM). At 233-241 (VNDVAGAPS) the chain is on the periplasmic side. The chain crosses the membrane as a helical span at residues 242 to 262 (AVKWMYAIEACLSLTLLYPIA). At 263–274 (RWSEKHFRLEHR) the chain is on the cytoplasmic side. Residues 275–295 (LMAGLLIMSLSMMPVGMVSGL) traverse the membrane as a helical segment. Residues 296–297 (QQ) are Periplasmic-facing. The helical transmembrane segment at 298 to 318 (LFTLICLFYIGSIIAEPARET) threads the bilayer. Residues 319 to 337 (LSASLADARARGSYMGFSR) lie on the Cytoplasmic side of the membrane. A helical transmembrane segment spans residues 338–358 (LGLAIGGAIGYIGGGWLFDLG). Over 359-365 (KSAHQPE) the chain is Periplasmic. A helical membrane pass occupies residues 366 to 386 (LPWMMLGIIGIFTFLALGWQF). Topologically, residues 387 to 400 (SQKRAARRLLERDA) are cytoplasmic.

It belongs to the major facilitator superfamily. DHA1 family. MdtH (TC 2.A.1.2.21) subfamily.

It is found in the cell inner membrane. The sequence is that of Multidrug resistance protein MdtH from Shigella boydii serotype 4 (strain Sb227).